The following is a 173-amino-acid chain: Eggshell protein (173 aa).

The signal sequence occupies residues 1-18; sequence MKQSLTLVFLVAIGYATA. Positions 145-162 are enriched in gly residues; it reads GSGKGKGGGKGGKGGKGG. Positions 145 to 173 are disordered; it reads GSGKGKGGGKGGKGGKGGTYKPSHYGGGY.

This is Eggshell protein from Schistosoma mansoni (Blood fluke).